We begin with the raw amino-acid sequence, 437 residues long: MSTLTPREIVAELNKFVVGQEQAKRMVAVAVRNRWRRQHLPSDLRDEVSPKNIIMMGPTGVGKTEIARRLARLSGAPFIKVEATKFTEVGYVGRDVESMVRDLMEIGINLVRDEENARVRKAAEAAAESRLMDLLLPNSFGQEERASTREKLLQQFRLGFLDEREVEMEVTEQGGGGVDIFAIPGMEQMGGQVKDMFSKAFPPKHSRRKMKIRDAFNVLVQEESGKLVDQDALSQRAKERVEQTGIIFIDEIDKIASSSQNRTSDISREGVQRDLLPIVEGSSVNTKYGMIRTDHILFIAAGAFHFSKPSDMIPELQGRFPLRVELQALGREEFLRILTEPDNALTKQYEALLGTEQIRLSFTMDGLEEIAAFAEDINSRTENIGARRLYTIMEKILADISFDAPDMPGAQIVVNKDYVVEHLQDVRGDQDLTQYIL.

ATP-binding positions include Val-18, 60-65 (GVGKTE), Asp-250, Glu-315, and Arg-387.

Belongs to the ClpX chaperone family. HslU subfamily. A double ring-shaped homohexamer of HslV is capped on each side by a ring-shaped HslU homohexamer. The assembly of the HslU/HslV complex is dependent on binding of ATP.

It is found in the cytoplasm. Functionally, ATPase subunit of a proteasome-like degradation complex; this subunit has chaperone activity. The binding of ATP and its subsequent hydrolysis by HslU are essential for unfolding of protein substrates subsequently hydrolyzed by HslV. HslU recognizes the N-terminal part of its protein substrates and unfolds these before they are guided to HslV for hydrolysis. In Desulfovibrio desulfuricans (strain ATCC 27774 / DSM 6949 / MB), this protein is ATP-dependent protease ATPase subunit HslU.